The following is a 572-amino-acid chain: E3 SUMO-protein ligase PIAS2 (572 aa).

Residues 11–45 (VSSFRVSELQVLLGFAGRNKSGRKHDLLMRALHLL) enclose the SAP domain. The LXXLL motif signature appears at 19–23 (LQVLL). Residues lysine 46 and lysine 249 each participate in a glycyl lysine isopeptide (Lys-Gly) (interchain with G-Cter in SUMO2) cross-link. A PINIT domain is found at 134–299 (QPSPPIPPVH…SMSVYLVRQL (166 aa)). The SP-RING-type zinc finger occupies 331-412 (PDSEIATTSL…FMEILNDCSD (82 aa)). Positions 362, 364, 385, and 388 each coordinate Zn(2+). Residues lysine 430, lysine 435, lysine 443, and lysine 452 each participate in a glycyl lysine isopeptide (Lys-Gly) (interchain with G-Cter in SUMO2) cross-link. The tract at residues 467–473 (IDVIDLT) is SUMO1-binding. A phosphoserine mark is found at serine 476, serine 477, and serine 478. The Nuclear localization signal motif lies at 484 to 492 (PPAKRKCIF). Lysine 489 is covalently cross-linked (Glycyl lysine isopeptide (Lys-Gly) (interchain with G-Cter in SUMO2)). The residue at position 499 (serine 499) is a Phosphoserine. Residue lysine 502 forms a Glycyl lysine isopeptide (Lys-Gly) (interchain with G-Cter in SUMO2) linkage. The disordered stretch occupies residues 523–572 (AAIPPSLTDYSVPFHHTPVSSMSSDLPGEQRRNDINNEVQLGTSSDTVQQ). The segment covering 558–572 (NNEVQLGTSSDTVQQ) has biased composition (polar residues).

It belongs to the PIAS family. In terms of assembly, binds SUMO1 and UBE2I. Interacts with AXIN1, JUN, MDM2, PARK7, TP53 and TP73 isoform alpha, but not TP73 isoform beta. Interacts with STAT4 following IL12 and IFN-alpha stimulation of T-cells. Interacts also with GTF2I, GTF2IRD1, IKFZ1, DAB2 and MSX2, as well as with several steroid receptors, including ESR1, ESR2, NR3C1, PGR, AR, and with NCOA2. Sumoylation of a target protein seems to enhance the interaction. Binds to sumoylated ELK1. Binds DNA, such as CDKN1A promoter, in a sequence-specific manner. Interacts with PLAG1. Interacts with KLF8; the interaction results in SUMO ligation and repression of KLF8 transcriptional activity and of its cell cycle progression into G(1) phase. Interacts with IFIH1/MDA5. Interacts with PML. Interacts with PRDM1. In terms of processing, sumoylated. As to expression, mainly expressed in testis.

The protein localises to the nucleus speckle. The protein resides in the nucleus. It is found in the PML body. Its pathway is protein modification; protein sumoylation. In terms of biological role, functions as an E3-type small ubiquitin-like modifier (SUMO) ligase, stabilizing the interaction between UBE2I and the substrate, and as a SUMO-tethering factor. Plays a crucial role as a transcriptional coregulation in various cellular pathways, including the STAT pathway, the p53 pathway and the steroid hormone signaling pathway. The effects of this transcriptional coregulation, transactivation or silencing may vary depending upon the biological context and PIAS2 isoform studied. However, it seems to be mostly involved in gene silencing. Binds to sumoylated ELK1 and enhances its transcriptional activity by preventing recruitment of HDAC2 by ELK1, thus reversing SUMO-mediated repression of ELK1 transactivation activity. Sumoylates PML at'Lys-65' and 'Lys-160'. This is E3 SUMO-protein ligase PIAS2 (Pias2) from Rattus norvegicus (Rat).